Consider the following 162-residue polypeptide: Transcription elongation factor GreA (162 aa).

A coiled-coil region spans residues 44 to 69 (SENAEYEAAREKQAFVEARIKHLEDI).

Belongs to the GreA/GreB family.

In terms of biological role, necessary for efficient RNA polymerase transcription elongation past template-encoded arresting sites. The arresting sites in DNA have the property of trapping a certain fraction of elongating RNA polymerases that pass through, resulting in locked ternary complexes. Cleavage of the nascent transcript by cleavage factors such as GreA or GreB allows the resumption of elongation from the new 3'terminus. GreA releases sequences of 2 to 3 nucleotides. The polypeptide is Transcription elongation factor GreA (Rickettsia bellii (strain RML369-C)).